A 127-amino-acid chain; its full sequence is Large ribosomal subunit protein uL22 (127 aa).

It belongs to the universal ribosomal protein uL22 family. In terms of assembly, part of the 50S ribosomal subunit.

Functionally, this protein binds specifically to 23S rRNA; its binding is stimulated by other ribosomal proteins, e.g. L4, L17, and L20. It is important during the early stages of 50S assembly. It makes multiple contacts with different domains of the 23S rRNA in the assembled 50S subunit and ribosome. Its function is as follows. The globular domain of the protein is located near the polypeptide exit tunnel on the outside of the subunit, while an extended beta-hairpin is found that lines the wall of the exit tunnel in the center of the 70S ribosome. The polypeptide is Large ribosomal subunit protein uL22 (Methylobacterium nodulans (strain LMG 21967 / CNCM I-2342 / ORS 2060)).